The primary structure comprises 314 residues: Thioredoxin reductase aclD (314 aa).

FAD contacts are provided by residues 13-16 (GGPA), 35-40 (DSKSYR), histidine 47, and alanine 112. Cysteine 136 and cysteine 139 are joined by a disulfide. Residues aspartate 281 and 288–289 (AA) contribute to the FAD site.

The protein belongs to the class-II pyridine nucleotide-disulfide oxidoreductase family. As to quaternary structure, homodimer. It depends on FAD as a cofactor.

It functions in the pathway mycotoxin biosynthesis. Thioredoxin reductase; part of the gene cluster that mediates the biosynthesis of aspirochlorine (or antibiotic A30641), an unusual halogenated spiro compound with distinctive antifungal properties due to selective inhibition of protein biosynthesis, and which is also active against bacteria, viruses, and murine tumor cells. The non-ribosomal peptide synthetase (NRPS) aclP is responsible the formation of the diketopiperazine (DKP) core from the condensation of 2 phenylalanine residues. One Phe residue is tailored into chlorotyrosine by hydroxylation and chlorination, whereas the second Phe undergoes an unprecedented C-C bond cleavage to be converted into glycine. After formation of the DKP, sulfur is incorporated into the DKP by conjugation with glutathione by aclG, followed by its stepwise degradation to the thiol by aclI, aclJ and aclK, and the dithiol oxidation by aclT. In addition, oxygenases (aclB, aclC, aclL and aclO) and O-methyltransferases (aclM and aclU) act as tailoring enzymes to produce the intermediate dechloroaspirochlorine. Ultimately, chlorination of dechloroaspirochlorine by the halogenase aclH is the last step in the aspirochlorine pathway. In Aspergillus oryzae (strain ATCC 42149 / RIB 40) (Yellow koji mold), this protein is Thioredoxin reductase aclD.